An 82-amino-acid polypeptide reads, in one-letter code: Large ribosomal subunit protein bL28 (82 aa).

The tract at residues 1–25 is disordered; sequence MAKVDQITKKRAMTGNTRSHALNHS.

It belongs to the bacterial ribosomal protein bL28 family.

The sequence is that of Large ribosomal subunit protein bL28 from Malacoplasma penetrans (strain HF-2) (Mycoplasma penetrans).